The following is a 427-amino-acid chain: Adenylosuccinate synthetase (427 aa).

GTP-binding positions include glycine 12–lysine 18 and glycine 40–threonine 42. Residue aspartate 13 is the Proton acceptor of the active site. Residues aspartate 13 and glycine 40 each contribute to the Mg(2+) site. IMP-binding positions include aspartate 13–lysine 16, asparagine 38–histidine 41, threonine 131, arginine 145, glutamine 226, threonine 241, and arginine 305. Histidine 41 serves as the catalytic Proton donor. Alanine 301–arginine 307 is a substrate binding site. GTP-binding positions include arginine 307, lysine 333 to aspartate 335, and serine 415 to glycine 417.

It belongs to the adenylosuccinate synthetase family. Homodimer. Mg(2+) serves as cofactor.

It is found in the cytoplasm. The catalysed reaction is IMP + L-aspartate + GTP = N(6)-(1,2-dicarboxyethyl)-AMP + GDP + phosphate + 2 H(+). It functions in the pathway purine metabolism; AMP biosynthesis via de novo pathway; AMP from IMP: step 1/2. Its function is as follows. Plays an important role in the de novo pathway of purine nucleotide biosynthesis. Catalyzes the first committed step in the biosynthesis of AMP from IMP. The chain is Adenylosuccinate synthetase from Oleidesulfovibrio alaskensis (strain ATCC BAA-1058 / DSM 17464 / G20) (Desulfovibrio alaskensis).